We begin with the raw amino-acid sequence, 556 residues long: Oxygen-dependent choline dehydrogenase (556 aa).

4–33 (DYIIIGAGSAGNVLATRLTEDPNTTVLLLE) is a binding site for FAD. His-473 functions as the Proton acceptor in the catalytic mechanism.

The protein belongs to the GMC oxidoreductase family. Requires FAD as cofactor.

The enzyme catalyses choline + A = betaine aldehyde + AH2. It carries out the reaction betaine aldehyde + NAD(+) + H2O = glycine betaine + NADH + 2 H(+). Its pathway is amine and polyamine biosynthesis; betaine biosynthesis via choline pathway; betaine aldehyde from choline (cytochrome c reductase route): step 1/1. Its function is as follows. Involved in the biosynthesis of the osmoprotectant glycine betaine. Catalyzes the oxidation of choline to betaine aldehyde and betaine aldehyde to glycine betaine at the same rate. The chain is Oxygen-dependent choline dehydrogenase from Escherichia coli O17:K52:H18 (strain UMN026 / ExPEC).